The chain runs to 404 residues: Cysteine desulfurase IscS (404 aa).

Residues 75-76, Asn-155, Gln-183, and 203-205 each bind pyridoxal 5'-phosphate; these read AT and SSH. Position 206 is an N6-(pyridoxal phosphate)lysine (Lys-206). Thr-243 serves as a coordination point for pyridoxal 5'-phosphate. The active-site Cysteine persulfide intermediate is the Cys-328. Cys-328 contributes to the [2Fe-2S] cluster binding site.

Belongs to the class-V pyridoxal-phosphate-dependent aminotransferase family. NifS/IscS subfamily. As to quaternary structure, homodimer. Forms a heterotetramer with IscU, interacts with other sulfur acceptors. Requires pyridoxal 5'-phosphate as cofactor.

It is found in the cytoplasm. It catalyses the reaction (sulfur carrier)-H + L-cysteine = (sulfur carrier)-SH + L-alanine. It functions in the pathway cofactor biosynthesis; iron-sulfur cluster biosynthesis. Its function is as follows. Master enzyme that delivers sulfur to a number of partners involved in Fe-S cluster assembly, tRNA modification or cofactor biosynthesis. Catalyzes the removal of elemental sulfur atoms from cysteine to produce alanine. Functions as a sulfur delivery protein for Fe-S cluster synthesis onto IscU, an Fe-S scaffold assembly protein, as well as other S acceptor proteins. The chain is Cysteine desulfurase IscS from Pasteurella multocida (strain Pm70).